We begin with the raw amino-acid sequence, 501 residues long: Glycerol kinase (501 aa).

Residue Thr12 participates in ADP binding. Positions 12, 13, and 14 each coordinate ATP. Residue Thr12 participates in sn-glycerol 3-phosphate binding. Arg16 provides a ligand contact to ADP. The sn-glycerol 3-phosphate site is built by Arg82, Glu83, Tyr134, and Asp244. Residues Arg82, Glu83, Tyr134, Asp244, and Gln245 each coordinate glycerol. 2 residues coordinate ADP: Thr266 and Gly310. Residues Thr266, Gly310, Gln314, and Gly411 each coordinate ATP. Gly411 and Asn415 together coordinate ADP.

It belongs to the FGGY kinase family.

It catalyses the reaction glycerol + ATP = sn-glycerol 3-phosphate + ADP + H(+). It functions in the pathway polyol metabolism; glycerol degradation via glycerol kinase pathway; sn-glycerol 3-phosphate from glycerol: step 1/1. Inhibited by fructose 1,6-bisphosphate (FBP). Its function is as follows. Key enzyme in the regulation of glycerol uptake and metabolism. Catalyzes the phosphorylation of glycerol to yield sn-glycerol 3-phosphate. This chain is Glycerol kinase, found in Methylorubrum extorquens (strain PA1) (Methylobacterium extorquens).